A 270-amino-acid chain; its full sequence is MPELPEVETTRRGIAPHLEGQRVSRVVVRDRRLRWPIPEDLDVRLSGQRILSVERRAKYLLINAEVGTLISHLGMSGNLRLVQLGLPAAKHEHVDIELESGLMLRYTDPRRFGAMLWSLDPLNHELLLRLGPEPLTDLFDGERLFQLSRGRTMAVKPFIMDNAVVVGVGNIYATEALFAAGIDPRREAGGISRTRYLKLAIEIKRVLAAAIEQGGTTLRDFIGGDGQPGYFQQELFVYGRGGMPCKLCGTTLREAKLGQRASVYCPRCQR.

The Schiff-base intermediate with DNA role is filled by Pro2. Glu3 acts as the Proton donor in catalysis. Catalysis depends on Lys58, which acts as the Proton donor; for beta-elimination activity. Residues His91, Arg110, and Arg151 each coordinate DNA. Residues 236 to 270 (FVYGRGGMPCKLCGTTLREAKLGQRASVYCPRCQR) form an FPG-type zinc finger. The Proton donor; for delta-elimination activity role is filled by Arg260.

It belongs to the FPG family. In terms of assembly, monomer. The cofactor is Zn(2+).

The enzyme catalyses Hydrolysis of DNA containing ring-opened 7-methylguanine residues, releasing 2,6-diamino-4-hydroxy-5-(N-methyl)formamidopyrimidine.. It carries out the reaction 2'-deoxyribonucleotide-(2'-deoxyribose 5'-phosphate)-2'-deoxyribonucleotide-DNA = a 3'-end 2'-deoxyribonucleotide-(2,3-dehydro-2,3-deoxyribose 5'-phosphate)-DNA + a 5'-end 5'-phospho-2'-deoxyribonucleoside-DNA + H(+). Involved in base excision repair of DNA damaged by oxidation or by mutagenic agents. Acts as a DNA glycosylase that recognizes and removes damaged bases. Has a preference for oxidized purines, such as 7,8-dihydro-8-oxoguanine (8-oxoG). Has AP (apurinic/apyrimidinic) lyase activity and introduces nicks in the DNA strand. Cleaves the DNA backbone by beta-delta elimination to generate a single-strand break at the site of the removed base with both 3'- and 5'-phosphates. The polypeptide is Formamidopyrimidine-DNA glycosylase (Pseudomonas putida (strain W619)).